The chain runs to 122 residues: Small ribosomal subunit protein uS13 (122 aa).

Positions 97-122 (PCRGQRTKTNARTRKGPARTVAGKKK) are disordered.

The protein belongs to the universal ribosomal protein uS13 family. As to quaternary structure, part of the 30S ribosomal subunit. Forms a loose heterodimer with protein S19. Forms two bridges to the 50S subunit in the 70S ribosome.

Functionally, located at the top of the head of the 30S subunit, it contacts several helices of the 16S rRNA. In the 70S ribosome it contacts the 23S rRNA (bridge B1a) and protein L5 of the 50S subunit (bridge B1b), connecting the 2 subunits; these bridges are implicated in subunit movement. Contacts the tRNAs in the A and P-sites. In Geobacter sp. (strain M21), this protein is Small ribosomal subunit protein uS13.